The chain runs to 365 residues: Protein-glutamate methylesterase/protein-glutamine glutaminase 2 (365 aa).

Positions 18–135 (RVLIVDDSAM…GQGLPAIMRD (118 aa)) constitute a Response regulatory domain. The residue at position 69 (D69) is a 4-aspartylphosphate. The region spanning 162–355 (GASEDWIHAL…ARMMLAAAAD (194 aa)) is the CheB-type methylesterase domain. Residues S174, H200, and D297 contribute to the active site.

The protein belongs to the CheB family. In terms of processing, phosphorylated by CheA. Phosphorylation of the N-terminal regulatory domain activates the methylesterase activity.

The protein resides in the cytoplasm. The catalysed reaction is [protein]-L-glutamate 5-O-methyl ester + H2O = L-glutamyl-[protein] + methanol + H(+). It carries out the reaction L-glutaminyl-[protein] + H2O = L-glutamyl-[protein] + NH4(+). In terms of biological role, involved in chemotaxis. Part of a chemotaxis signal transduction system that modulates chemotaxis in response to various stimuli. Catalyzes the demethylation of specific methylglutamate residues introduced into the chemoreceptors (methyl-accepting chemotaxis proteins or MCP) by CheR. Also mediates the irreversible deamidation of specific glutamine residues to glutamic acid. This Cereibacter sphaeroides (strain ATCC 17023 / DSM 158 / JCM 6121 / CCUG 31486 / LMG 2827 / NBRC 12203 / NCIMB 8253 / ATH 2.4.1.) (Rhodobacter sphaeroides) protein is Protein-glutamate methylesterase/protein-glutamine glutaminase 2.